A 193-amino-acid polypeptide reads, in one-letter code: MNFLAHLHLATLADSSLLGNLMADFVRGNPQGSYADEIVAGIRLHRRVDSLTDSLPEVKQARQYFSDEFRRVSPITLDVLWDHYLARHWLQLVPDTPLQTFIDGAQSQIEPNLAQTPERFQNLNLYLWPERWMTRYAELPFIADVLHRMSVRRPKLAALSGSFQDIEQHYHQFEILFWQFYPRMMQLAKTQQL.

Belongs to the AcpH family.

It carries out the reaction holo-[ACP] + H2O = apo-[ACP] + (R)-4'-phosphopantetheine + H(+). Functionally, converts holo-ACP to apo-ACP by hydrolytic cleavage of the phosphopantetheine prosthetic group from ACP. This chain is Acyl carrier protein phosphodiesterase, found in Pectobacterium atrosepticum (strain SCRI 1043 / ATCC BAA-672) (Erwinia carotovora subsp. atroseptica).